The following is a 365-amino-acid chain: tRNA 2-selenouridine synthase (365 aa).

The 123-residue stretch at 16–138 folds into the Rhodanese domain; that stretch reads FLLKTPLIDL…LRRYLINVID (123 aa). Cys98 functions as the S-selanylcysteine intermediate in the catalytic mechanism.

Belongs to the SelU family. As to quaternary structure, monomer.

It catalyses the reaction 5-methylaminomethyl-2-thiouridine(34) in tRNA + selenophosphate + (2E)-geranyl diphosphate + H2O + H(+) = 5-methylaminomethyl-2-selenouridine(34) in tRNA + (2E)-thiogeraniol + phosphate + diphosphate. The enzyme catalyses 5-methylaminomethyl-2-thiouridine(34) in tRNA + (2E)-geranyl diphosphate = 5-methylaminomethyl-S-(2E)-geranyl-thiouridine(34) in tRNA + diphosphate. It carries out the reaction 5-methylaminomethyl-S-(2E)-geranyl-thiouridine(34) in tRNA + selenophosphate + H(+) = 5-methylaminomethyl-2-(Se-phospho)selenouridine(34) in tRNA + (2E)-thiogeraniol. The catalysed reaction is 5-methylaminomethyl-2-(Se-phospho)selenouridine(34) in tRNA + H2O = 5-methylaminomethyl-2-selenouridine(34) in tRNA + phosphate. Involved in the post-transcriptional modification of the uridine at the wobble position (U34) of tRNA(Lys), tRNA(Glu) and tRNA(Gln). Catalyzes the conversion of 2-thiouridine (S2U-RNA) to 2-selenouridine (Se2U-RNA). Acts in a two-step process involving geranylation of 2-thiouridine (S2U) to S-geranyl-2-thiouridine (geS2U) and subsequent selenation of the latter derivative to 2-selenouridine (Se2U) in the tRNA chain. In Psychromonas ingrahamii (strain DSM 17664 / CCUG 51855 / 37), this protein is tRNA 2-selenouridine synthase.